The sequence spans 253 residues: 5'-nucleotidase SurE (253 aa).

A divalent metal cation is bound by residues Asp8, Asp9, Ser39, and Asn92.

The protein belongs to the SurE nucleotidase family. A divalent metal cation is required as a cofactor.

The protein resides in the cytoplasm. The enzyme catalyses a ribonucleoside 5'-phosphate + H2O = a ribonucleoside + phosphate. Nucleotidase that shows phosphatase activity on nucleoside 5'-monophosphates. In Burkholderia vietnamiensis (strain G4 / LMG 22486) (Burkholderia cepacia (strain R1808)), this protein is 5'-nucleotidase SurE.